A 410-amino-acid chain; its full sequence is Putative transposase Rv3428c (410 aa).

Residues 40 to 220 (VPRGPVDAGS…QPLRMFEAVE (181 aa)) enclose the Integrase catalytic domain. Residues 390–410 (AANEPTTSSPASTAGGVPARP) are disordered.

This sequence belongs to the transposase IS21/IS408/IS1162 family.

This is Putative transposase Rv3428c from Mycobacterium tuberculosis (strain ATCC 25618 / H37Rv).